We begin with the raw amino-acid sequence, 189 residues long: Thymidine kinase (189 aa).

ATP is bound by residues 9 to 16 (GTMNSGKT) and 85 to 88 (DESQ). Glu86 acts as the Proton acceptor in catalysis. Zn(2+) contacts are provided by Cys143, Cys146, Cys180, and His183.

Belongs to the thymidine kinase family. In terms of assembly, homotetramer.

Its subcellular location is the cytoplasm. It catalyses the reaction thymidine + ATP = dTMP + ADP + H(+). This chain is Thymidine kinase, found in Streptococcus pyogenes serotype M6 (strain ATCC BAA-946 / MGAS10394).